The following is a 128-amino-acid chain: MFS18 protein (128 aa).

The N-terminal stretch at 1–25 (MARSSKMMVAARLLALALAVSTAEA) is a signal peptide. Residues 26–79 (RNIKTTTTEKKDDAVVQPQTFPPFDRLGGGASPAFGGLPGGSIPGSSIPGFSMP) form a disordered region. Gly residues predominate over residues 52-68 (LGGGASPAFGGLPGGSI). 11 repeat units span residues 64–67 (PGGS), 64–75 (PGGSIPGSSIPG), 69–72 (PGSS), 69–80 (PGSSIPGFSMPG), 74–77 (PGFS), 79–82 (PGSG), 81–92 (SGSSLPGFSLPG), 86–89 (PGFS), 91–94 (PGSG), 104–107 (PGFS), and 113–116 (PGSP). Residues 64–92 (PGGSIPGSSIPGFSMPGSGSSLPGFSLPG) are 3 X approximate tandem repeats. Residues 64–116 (PGGSIPGSSIPGFSMPGSGSSLPGFSLPGSGTMPLFGGGSPGFSGFGGMPGSP) form an 8 X 4 AA approximate repeats region. Residues 69-79 (PGSSIPGFSMP) show a composition bias toward low complexity. Positions 99 to 113 (FGGGSPGFSGFGGMP) are enriched in gly residues. The segment at 99-128 (FGGGSPGFSGFGGMPGSPTAGSVPEHANKP) is disordered.

Enhanced expression in male flowers. Accumulates in the glumes and in anther walls, paleas and lemmas of mature florets.

The polypeptide is MFS18 protein (MFS18) (Zea mays (Maize)).